The chain runs to 183 residues: uncharacterized protein (183 aa).

The interval 1-36 (MAKRGNKKKQEAPLSLGKHTVGGRVGKPTNAKTGSA) is disordered. An RRM domain is found at 100–174 (TNVVIENLAP…FKLSCYIKKN (75 aa)).

The protein resides in the nucleus. The protein localises to the nucleolus. This is an uncharacterized protein from Schizosaccharomyces pombe (strain 972 / ATCC 24843) (Fission yeast).